A 269-amino-acid chain; its full sequence is MASSPKAPKSHRKFQSIYHPTRPLSLWQDNQHDQGEVRIEIIPLIDVVFCILTFFILGAVGLSRQQAISLDLPRASTGAPQMREMFMVSLDDLGQLYVEKQPVSQEQMVSALQNYHQYNPSGLIVLHASRNASYNDVVQLLDTLRTVGGDRVALATLPGDGQTPSGMNPNSFNNPNLGLPGMTPGNAFPNGANPGMSNFNNSNPGGSGAGVPNFSNTPLPGMPDANGNVSPNPGMNPGFPGGGAMSPDPNSQSPNLPGMGNTVPSAPQQ.

Over methionine 1–glutamate 40 the chain is Cytoplasmic. A helical transmembrane segment spans residues isoleucine 41–glycine 61. The Periplasmic segment spans residues leucine 62–glutamine 269. A disordered region spans residues asparagine 190–glutamine 269. Residues asparagine 193 to proline 204 show a composition bias toward low complexity.

It belongs to the ExbD/TolR family.

The protein resides in the cell inner membrane. The sequence is that of Putative biopolymer transport protein ExbD from Synechocystis sp. (strain ATCC 27184 / PCC 6803 / Kazusa).